The chain runs to 648 residues: Replication protein E1 (648 aa).

The Nuclear localization signal signature appears at 83–85 (KRK). S89, S93, and S107 each carry phosphoserine; by host. The Nuclear export signal signature appears at 106–115 (ISPRLNAIQL). The segment at 153–188 (HGEPENGCGGGGHGRDKEGEGQVHTEVHTESEIEHH) is disordered. Basic and acidic residues predominate over residues 165 to 188 (HGRDKEGEGQVHTEVHTESEIEHH). The tract at residues 186–352 (EHHTGTTRVL…QTIVEHGLAD (167 aa)) is DNA-binding region. Positions 451–601 (IEFISFLSKL…FPFDRNGNAV (151 aa)) constitute an SF3 helicase domain. Position 477 to 484 (477 to 484 (GPPDTGKS)) interacts with ATP. K558 is covalently cross-linked (Glycyl lysine isopeptide (Lys-Gly) (interchain with G-Cter in SUMO)).

It belongs to the papillomaviridae E1 protein family. As to quaternary structure, can form hexamers. Interacts with E2 protein; this interaction increases E1 DNA binding specificity. Interacts with host DNA polymerase subunit POLA2. Interacts with host single stranded DNA-binding protein RPA1. Interacts with host TOP1; this interaction stimulates the enzymatic activity of TOP1. In terms of processing, phosphorylated. Post-translationally, sumoylated.

It is found in the host nucleus. The catalysed reaction is Couples ATP hydrolysis with the unwinding of duplex DNA by translocating in the 3'-5' direction.. It catalyses the reaction ATP + H2O = ADP + phosphate + H(+). Functionally, ATP-dependent DNA 3'-5' helicase required for initiation of viral DNA replication. It forms a complex with the viral E2 protein. The E1-E2 complex binds to the replication origin which contains binding sites for both proteins. During the initial step, a dimer of E1 interacts with a dimer of protein E2 leading to a complex that binds the viral origin of replication with high specificity. Then, a second dimer of E1 displaces the E2 dimer in an ATP-dependent manner to form the E1 tetramer. Following this, two E1 monomers are added to each half of the site, which results in the formation of two E1 trimers on the viral ori. Subsequently, two hexamers will be created. The double hexamer acts as a bi-directional helicase machinery and unwinds the viral DNA and then recruits the host DNA polymerase to start replication. The chain is Replication protein E1 from Pan paniscus (Pygmy chimpanzee).